The sequence spans 333 residues: UPF0285 protein MTH_1441 (333 aa).

The protein belongs to the UPF0285 family.

This chain is UPF0285 protein MTH_1441, found in Methanothermobacter thermautotrophicus (strain ATCC 29096 / DSM 1053 / JCM 10044 / NBRC 100330 / Delta H) (Methanobacterium thermoautotrophicum).